A 156-amino-acid polypeptide reads, in one-letter code: Small ribosomal subunit protein uS7 (156 aa).

This sequence belongs to the universal ribosomal protein uS7 family. In terms of assembly, part of the 30S ribosomal subunit. Contacts proteins S9 and S11.

In terms of biological role, one of the primary rRNA binding proteins, it binds directly to 16S rRNA where it nucleates assembly of the head domain of the 30S subunit. Is located at the subunit interface close to the decoding center, probably blocks exit of the E-site tRNA. The chain is Small ribosomal subunit protein uS7 from Cellvibrio japonicus (strain Ueda107) (Pseudomonas fluorescens subsp. cellulosa).